Consider the following 545-residue polypeptide: Glucose starvation modulator protein 1 (545 aa).

Residues 20–48 (CGFCHEKHLQCDVGRPCQNCRKRNIASFC) constitute a DNA-binding region (zn(2)-C6 fungal-type). Over residues 51-60 (KVKRRRKRKR) the composition is skewed to basic residues. Disordered stretches follow at residues 51–131 (KVKR…AMKD) and 228–270 (YISL…WQQQ). The span at 61-71 (SDASNFDKDEA) shows a compositional bias: basic and acidic residues. Residues 72–92 (ATQTLNFNTVNPGEGSSSAMT) show a composition bias toward polar residues. Low complexity predominate over residues 98 to 110 (TGTTTATTTRTTT). Residues 111–125 (NFRSESKASSSTENI) show a composition bias toward polar residues. Low complexity predominate over residues 257–270 (QQKESQQMQLWQQQ). One can recognise a PAS domain in the interval 416 to 486 (ELENMSKLVN…DLFHEHLAFG (71 aa)).

The protein belongs to the ERT1/acuK family.

Its subcellular location is the nucleus. In terms of biological role, transcription factor which regulates nonfermentable carbon utilization. This Zygosaccharomyces rouxii (strain ATCC 2623 / CBS 732 / NBRC 1130 / NCYC 568 / NRRL Y-229) protein is Glucose starvation modulator protein 1 (GSM1).